Consider the following 329-residue polypeptide: uncharacterized protein (329 aa).

The interval 284 to 303 is disordered; sequence SGGGHSEAGGLNAPYDKSKS.

This is an uncharacterized protein from Methanocaldococcus jannaschii (strain ATCC 43067 / DSM 2661 / JAL-1 / JCM 10045 / NBRC 100440) (Methanococcus jannaschii).